Reading from the N-terminus, the 394-residue chain is NAD(P)H-quinone oxidoreductase subunit H (394 aa).

The protein belongs to the complex I 49 kDa subunit family. As to quaternary structure, NDH-1 can be composed of about 15 different subunits; different subcomplexes with different compositions have been identified which probably have different functions.

The protein localises to the cellular thylakoid membrane. The enzyme catalyses a plastoquinone + NADH + (n+1) H(+)(in) = a plastoquinol + NAD(+) + n H(+)(out). The catalysed reaction is a plastoquinone + NADPH + (n+1) H(+)(in) = a plastoquinol + NADP(+) + n H(+)(out). Its function is as follows. NDH-1 shuttles electrons from an unknown electron donor, via FMN and iron-sulfur (Fe-S) centers, to quinones in the respiratory and/or the photosynthetic chain. The immediate electron acceptor for the enzyme in this species is believed to be plastoquinone. Couples the redox reaction to proton translocation, and thus conserves the redox energy in a proton gradient. Cyanobacterial NDH-1 also plays a role in inorganic carbon-concentration. The polypeptide is NAD(P)H-quinone oxidoreductase subunit H (Synechococcus sp. (strain CC9902)).